We begin with the raw amino-acid sequence, 350 residues long: S-adenosylmethionine:tRNA ribosyltransferase-isomerase (350 aa).

Belongs to the QueA family. As to quaternary structure, monomer.

The protein resides in the cytoplasm. It carries out the reaction 7-aminomethyl-7-carbaguanosine(34) in tRNA + S-adenosyl-L-methionine = epoxyqueuosine(34) in tRNA + adenine + L-methionine + 2 H(+). It participates in tRNA modification; tRNA-queuosine biosynthesis. In terms of biological role, transfers and isomerizes the ribose moiety from AdoMet to the 7-aminomethyl group of 7-deazaguanine (preQ1-tRNA) to give epoxyqueuosine (oQ-tRNA). This is S-adenosylmethionine:tRNA ribosyltransferase-isomerase from Bacillus cereus (strain B4264).